A 146-amino-acid polypeptide reads, in one-letter code: CysO-cysteine peptidase (146 aa).

In terms of domain architecture, MPN spans 11-134 (LVIRADLVNA…LRSYRIVDGA (124 aa)). 3 residues coordinate Zn(2+): His-88, His-90, and Asp-101. Positions 88–101 (HSHTATEAYPSRTD) match the JAMM motif motif.

The protein belongs to the peptidase M67A family. Requires Zn(2+) as cofactor.

It carries out the reaction [CysO sulfur-carrier protein]-Gly-NH-CH2-C(O)-S-L-Cys + H2O = [CysO sulfur-carrier protein]-C-terminal Gly-Gly + L-cysteine + H(+). Its pathway is amino-acid biosynthesis; L-cysteine biosynthesis. Protease that hydrolyzes the covalent CysO-cysteine adduct synthesized by CysM to release L-cysteine and regenerate CysO. This Mycobacterium bovis (strain ATCC BAA-935 / AF2122/97) protein is CysO-cysteine peptidase (mec).